The chain runs to 631 residues: Phosphomethylpyrimidine synthase (631 aa).

Residues N239, M268, Y297, H333, 353–355 (SRG), 394–397 (DGLR), and E433 contribute to the substrate site. H437 serves as a coordination point for Zn(2+). Y460 provides a ligand contact to substrate. Residue H501 coordinates Zn(2+). The [4Fe-4S] cluster site is built by C581, C584, and C589.

Belongs to the ThiC family. In terms of assembly, homodimer. [4Fe-4S] cluster is required as a cofactor.

The catalysed reaction is 5-amino-1-(5-phospho-beta-D-ribosyl)imidazole + S-adenosyl-L-methionine = 4-amino-2-methyl-5-(phosphooxymethyl)pyrimidine + CO + 5'-deoxyadenosine + formate + L-methionine + 3 H(+). Its pathway is cofactor biosynthesis; thiamine diphosphate biosynthesis. Functionally, catalyzes the synthesis of the hydroxymethylpyrimidine phosphate (HMP-P) moiety of thiamine from aminoimidazole ribotide (AIR) in a radical S-adenosyl-L-methionine (SAM)-dependent reaction. This chain is Phosphomethylpyrimidine synthase, found in Escherichia coli O45:K1 (strain S88 / ExPEC).